A 652-amino-acid chain; its full sequence is Fimbrin-4 (652 aa).

Calponin-homology (CH) domains are found at residues 116–233 (ESEK…KIQL), 261–364 (LAPE…HHRN), 388–494 (SREE…RYTM), and 509–617 (DITE…NWSL). Actin-binding stretches follow at residues 116–364 (ESEK…HHRN) and 388–617 (SREE…NWSL). A disordered region spans residues 623–652 (TESTVSDDTDVSSVTEEISNLSTDDGSSDV). Residues 640-652 (ISNLSTDDGSSDV) show a composition bias toward polar residues.

As to quaternary structure, interacts with F-actin.

It localises to the cytoplasm. The protein localises to the cytoskeleton. Its function is as follows. Cross-links actin filaments (F-actin). Stabilizes and prevents F-actin depolymerization mediated by profilin. May regulate actin cytoarchitecture, cell cycle, cell division, cell elongation and cytoplasmic tractus. This Arabidopsis thaliana (Mouse-ear cress) protein is Fimbrin-4.